The chain runs to 245 residues: Transmembrane protein 116 (245 aa).

The next 4 helical transmembrane spans lie at 24–44 (MAFV…FCLG), 88–108 (GIAI…VLLI), 141–161 (FYPV…IIKL), and 173–195 (LYVL…YGWT).

It localises to the membrane. In Homo sapiens (Human), this protein is Transmembrane protein 116 (TMEM116).